A 677-amino-acid polypeptide reads, in one-letter code: Beta-galactosidase BgaA (677 aa).

A substrate-binding site is contributed by R112. Position 116 (C116) interacts with Zn(2+). N150 contacts substrate. E151 acts as the Proton donor in catalysis. Zn(2+)-binding residues include C156, C158, and C161. The active-site Nucleophile is the E309. Residues W317 and 357-360 each bind substrate; that span reads EKYH.

Belongs to the glycosyl hydrolase 42 family. Dimer.

The catalysed reaction is Hydrolysis of terminal non-reducing beta-D-galactose residues in beta-D-galactosides.. Its activity is regulated as follows. No activity is lost during treatment with 20 or 100 mM EDTA in Z buffer for 3 hours at 0 degrees Celsius, nor is activity greatly stimulated by the addition of cations. Inhibited by 1 mM zinc and 1 mM copper, the levels of activity decrease to 10% of the untreated control. Nickel, cobalt and manganese at concentrations of 10 mM decrease enzyme activity to either 40% (for nickel and cobalt) or 60% (for manganese) of the activity in untreated controls. No change in enzyme activity in the presence of calcium and magnesium at concentrations up to 50 mM. EDTA-treated enzyme exhibits a slight increase in relative specific activity when it is assayed in the presence of 50 mM NaCl or 50 mM KCl, it does not exhibit enhanced activity at concentrations greater than 250 mM. Maintains between 20 and 40% of activity in the presence of 4 M NaCl or 4 M KCl, and it is more active in the presence of KCl than in the presence of NaCl. Retains 50% of activity in the presence of 3 M KCl or 2.5 M NaCl. Hydrolyzes o-nitrophenyl-beta-D-galactopyranoside (ONPG), p-nitrophenyl-beta-D-galactopyranoside (PNPG), 5-bromo-4-chloro-3-indoyl-beta-D-galactosde (X-gal), o-nitrophenyl-beta-D-fucopyranoside (ONPF) and p-nitrophenyl-beta-D-fucopyranoside (PNPF) with greatest activity towards ONPG and PNPG and low levels of activity with ONPF and PNPF. Detectable, but very low levels of activity towards p-nitrophenyl-beta-lactose (PNPL), p-nitrophenyl-beta-cellobiose (PNPC), p-nitrophenyl-alpha-galactopyranoside (PNP-alpha-G), and p-nitrophenyl-beta-xylopyranoside (PNPX). This Planococcus sp. (strain 'SOS Orange') protein is Beta-galactosidase BgaA.